The chain runs to 238 residues: Small proline-rich protein 3 (238 aa).

The tract at residues 1–67 (MSSYQQKQPF…CSTKVPEPGN (67 aa)) is disordered. An N-acetylserine modification is found at S2. A run of 21 repeats spans residues 52–59 (TKIPEPCS), 60–67 (TKVPEPGN), 68–75 (TVVLEPDY), 76–83 (TTMPGPCS), 84–91 (TNITEPDY), 92–99 (TTIPGPCS), 100–107 (TNITEPDY), 108–115 (TTIPGPCS), 116–123 (TNIPGPDR), 124–131 (TVVPGSCS), 132–139 (TNITEPDY), 140–147 (TTIPGPSS), 148–155 (TKIPDPGC), 156–163 (AMVPGPSP), 164–175 (SSTSEPSSEPCS), 176–183 (INVREPGY), 184–191 (MNASEPTH), 192–199 (AKVPDQGY), 200–207 (TKIPDQGS), 208–215 (SKVPEPCQ), and 216–223 (SRVPEVCP). The segment at 52–223 (TKIPEPCSTK…CQSRVPEVCP (172 aa)) is 21 X 8 AA approximate tandem repeats. Residues 110–238 (IPGPCSTNIP…VSAKQKTKQK (129 aa)) are disordered. Positions 163 to 175 (PSSTSEPSSEPCS) are enriched in low complexity.

Belongs to the cornifin (SPRR) family.

The protein resides in the cytoplasm. Its function is as follows. Cross-linked envelope protein of keratinocytes. The protein is Small proline-rich protein 3 (Sprr3) of Mus musculus (Mouse).